A 227-amino-acid chain; its full sequence is 7-cyano-7-deazaguanine synthase (227 aa).

8 to 18 (FSGGQDSTTCL) contacts ATP. Positions 187, 196, 199, and 202 each coordinate Zn(2+).

It belongs to the QueC family. It depends on Zn(2+) as a cofactor.

It carries out the reaction 7-carboxy-7-deazaguanine + NH4(+) + ATP = 7-cyano-7-deazaguanine + ADP + phosphate + H2O + H(+). It participates in purine metabolism; 7-cyano-7-deazaguanine biosynthesis. In terms of biological role, catalyzes the ATP-dependent conversion of 7-carboxy-7-deazaguanine (CDG) to 7-cyano-7-deazaguanine (preQ(0)). The polypeptide is 7-cyano-7-deazaguanine synthase (Shewanella pealeana (strain ATCC 700345 / ANG-SQ1)).